The following is a 333-amino-acid chain: Probable tRNA pseudouridine synthase B (333 aa).

Asp-71 serves as the catalytic Nucleophile. The PUA domain maps to 238–313; sequence LPKIWVRDSA…LVARTDRVVM (76 aa).

It belongs to the pseudouridine synthase TruB family. Type 2 subfamily.

The catalysed reaction is uridine(55) in tRNA = pseudouridine(55) in tRNA. Could be responsible for synthesis of pseudouridine from uracil-55 in the psi GC loop of transfer RNAs. This Pyrobaculum calidifontis (strain DSM 21063 / JCM 11548 / VA1) protein is Probable tRNA pseudouridine synthase B.